The following is a 218-amino-acid chain: ATP synthase subunit a (218 aa).

The next 5 membrane-spanning stretches (helical) occupy residues 17 to 37, 75 to 95, 104 to 124, 162 to 184, and 196 to 216; these read IYST…GIFL, YLPL…SWFI, DLST…IFGI, LFGN…PFLL, and GTIQ…NFVH.

It belongs to the ATPase A chain family. In terms of assembly, F-type ATPases have 2 components, CF(1) - the catalytic core - and CF(0) - the membrane proton channel. CF(1) has five subunits: alpha(3), beta(3), gamma(1), delta(1), epsilon(1). CF(0) has three main subunits: a(1), b(2) and c(9-12). The alpha and beta chains form an alternating ring which encloses part of the gamma chain. CF(1) is attached to CF(0) by a central stalk formed by the gamma and epsilon chains, while a peripheral stalk is formed by the delta and b chains. In this bacterium the a and b subunits are transcribed but do not seem to be translated, thus the ATP synthase consists of the alpha, beta, gamma, delta, epsilon and c subunits.

The protein localises to the cell membrane. Its function is as follows. Key component of the proton channel; it plays a direct role in the translocation of protons across the membrane. This Moorella thermoacetica (strain ATCC 39073 / JCM 9320) protein is ATP synthase subunit a.